The sequence spans 426 residues: Enolase (426 aa).

Position 163 (glutamine 163) interacts with (2R)-2-phosphoglycerate. Glutamate 205 (proton donor) is an active-site residue. Mg(2+) contacts are provided by aspartate 242, glutamate 283, and aspartate 310. (2R)-2-phosphoglycerate-binding residues include lysine 335, arginine 364, serine 365, and lysine 386. Lysine 335 acts as the Proton acceptor in catalysis.

Belongs to the enolase family. It depends on Mg(2+) as a cofactor.

The protein resides in the cytoplasm. It localises to the secreted. It is found in the cell surface. It catalyses the reaction (2R)-2-phosphoglycerate = phosphoenolpyruvate + H2O. It functions in the pathway carbohydrate degradation; glycolysis; pyruvate from D-glyceraldehyde 3-phosphate: step 4/5. Its function is as follows. Catalyzes the reversible conversion of 2-phosphoglycerate (2-PG) into phosphoenolpyruvate (PEP). It is essential for the degradation of carbohydrates via glycolysis. This chain is Enolase, found in Clavibacter michiganensis subsp. michiganensis (strain NCPPB 382).